Reading from the N-terminus, the 127-residue chain is Large ribosomal subunit protein bL17 (127 aa).

This sequence belongs to the bacterial ribosomal protein bL17 family. Part of the 50S ribosomal subunit. Contacts protein L32.

This chain is Large ribosomal subunit protein bL17, found in Lactiplantibacillus plantarum (strain ATCC BAA-793 / NCIMB 8826 / WCFS1) (Lactobacillus plantarum).